Consider the following 251-residue polypeptide: B3 domain-containing protein REM7 (251 aa).

2 DNA-binding regions (TF-B3) span residues 11–103 and 170–251; these read NSHF…LGPS and CFVA…SRLN.

The protein localises to the nucleus. This chain is B3 domain-containing protein REM7 (REM7), found in Arabidopsis thaliana (Mouse-ear cress).